The sequence spans 314 residues: Thymidylate synthase (314 aa).

DUMP contacts are provided by residues R32 and R176 to R177. C196 (nucleophile) is an active-site residue. DUMP is bound by residues R216–D219, N227, and H257–Y259. D219 contributes to the (6R)-5,10-methylene-5,6,7,8-tetrahydrofolate binding site. A (6R)-5,10-methylene-5,6,7,8-tetrahydrofolate-binding site is contributed by A313.

It belongs to the thymidylate synthase family. Bacterial-type ThyA subfamily. Homodimer.

The protein localises to the cytoplasm. It carries out the reaction dUMP + (6R)-5,10-methylene-5,6,7,8-tetrahydrofolate = 7,8-dihydrofolate + dTMP. It functions in the pathway pyrimidine metabolism; dTTP biosynthesis. Functionally, catalyzes the reductive methylation of 2'-deoxyuridine-5'-monophosphate (dUMP) to 2'-deoxythymidine-5'-monophosphate (dTMP) while utilizing 5,10-methylenetetrahydrofolate (mTHF) as the methyl donor and reductant in the reaction, yielding dihydrofolate (DHF) as a by-product. This enzymatic reaction provides an intracellular de novo source of dTMP, an essential precursor for DNA biosynthesis. The polypeptide is Thymidylate synthase (Novosphingobium aromaticivorans (strain ATCC 700278 / DSM 12444 / CCUG 56034 / CIP 105152 / NBRC 16084 / F199)).